Reading from the N-terminus, the 195-residue chain is Imidazoleglycerol-phosphate dehydratase (195 aa).

Belongs to the imidazoleglycerol-phosphate dehydratase family.

It localises to the cytoplasm. It carries out the reaction D-erythro-1-(imidazol-4-yl)glycerol 3-phosphate = 3-(imidazol-4-yl)-2-oxopropyl phosphate + H2O. It participates in amino-acid biosynthesis; L-histidine biosynthesis; L-histidine from 5-phospho-alpha-D-ribose 1-diphosphate: step 6/9. The protein is Imidazoleglycerol-phosphate dehydratase of Leuconostoc mesenteroides subsp. mesenteroides (strain ATCC 8293 / DSM 20343 / BCRC 11652 / CCM 1803 / JCM 6124 / NCDO 523 / NBRC 100496 / NCIMB 8023 / NCTC 12954 / NRRL B-1118 / 37Y).